A 592-amino-acid chain; its full sequence is Ferric-chelate reductase 1 (592 aa).

A helical transmembrane segment spans residues 2–22 (AAPQITLSVLVIALLTCSVTA). The Reelin domain occupies 13 to 179 (IALLTCSVTA…FTTPKATTQP (167 aa)). Residues Asn85, Asn308, Asn321, and Asn353 are each glycosylated (N-linked (GlcNAc...) asparagine). One can recognise a DOMON domain in the interval 216–331 (EPACVFLSFT…ESYYIFFAEG (116 aa)). Residues 335-534 (DGRIFRHSQQ…IGTEVILEIH (200 aa)) form the Cytochrome b561 domain. Residues 372 to 392 (AHGALMFVAWMTTVSIGVLVA) traverse the membrane as a helical segment. His373 and His414 together coordinate heme b. Helical transmembrane passes span 415 to 435 (RMLM…PFVY), 446 to 466 (HPYL…LATF), 477 to 499 (VFNW…AMFL), 515 to 535 (YAMM…EIHA), and 569 to 589 (VVLA…LSAI). His446 and His482 together coordinate heme b.

Belongs to the FRRS1 family. Requires heme b as cofactor. Expressed in spleen, liver and kidney with low expression in brain. Localizes in adult brain to the choroid plexus of the fourth, third, and lateral ventricles and to ependymal cells that line the ventricles.

It localises to the membrane. Ferric-chelate reductases reduce Fe(3+) to Fe(2+) before its transport from the endosome to the cytoplasm. The polypeptide is Ferric-chelate reductase 1 (FRRS1) (Mus musculus (Mouse)).